The following is a 46-amino-acid chain: DNA-directed RNA polymerases I, II, and III subunit rpabc4 (46 aa).

Zn(2+) contacts are provided by Cys7, Cys10, Cys24, and Cys27. The segment at 7–27 adopts a C4-type zinc-finger fold; it reads CGECGAEHEIKPKEPVKCKDC.

This sequence belongs to the archaeal Rpo12/eukaryotic RPC10 RNA polymerase subunit family. In terms of assembly, component of the RNA polymerase I (Pol I), RNA polymerase II (Pol II) and RNA polymerase III (Pol III) complexes consisting of at least 13, 12 and 17 subunits, respectively.

It localises to the nucleus. Its function is as follows. DNA-dependent RNA polymerase catalyzes the transcription of DNA into RNA using the four ribonucleoside triphosphates as substrates. Common component of RNA polymerases I, II and III which synthesize ribosomal RNA precursors, mRNA precursors and many functional non-coding RNAs, and a small RNAs, such as 5S rRNA and tRNAs, respectively. This is DNA-directed RNA polymerases I, II, and III subunit rpabc4 (polr2k) from Dictyostelium discoideum (Social amoeba).